A 1057-amino-acid polypeptide reads, in one-letter code: Carbamoyl phosphate synthase large chain (1057 aa).

The interval 1–401 (MPKRDDIQTI…SLLKAIRSLE (401 aa)) is carboxyphosphate synthetic domain. Residues Arg129, Arg169, Gly175, Gly176, Lys208, Ile210, Glu215, Gly241, Ile242, His243, Gln284, and Glu298 each coordinate ATP. The region spanning 133–327 (RTLMNDLNVP…IAKLAAKIAV (195 aa)) is the ATP-grasp 1 domain. Gln284, Glu298, and Asn300 together coordinate Mg(2+). 3 residues coordinate Mn(2+): Gln284, Glu298, and Asn300. The oligomerization domain stretch occupies residues 402–546 (YGVHHLGLPN…YGTYEDENES (145 aa)). The segment at 547–929 (IVTDKEKILV…ALYKGLTGSG (383 aa)) is carbamoyl phosphate synthetic domain. Residues 671–861 (EALLREISVP…MAQLAMRAIM (191 aa)) form the ATP-grasp 2 domain. Arg707, Arg746, Leu748, Glu752, Gly777, Val778, His779, Ser780, Gln820, and Glu832 together coordinate ATP. Gln820, Glu832, and Asn834 together coordinate Mg(2+). Mn(2+) is bound by residues Gln820, Glu832, and Asn834. The 128-residue stretch at 930 to 1057 (FEVKDHGTVL…ESMTFTMRNV (128 aa)) folds into the MGS-like domain. An allosteric domain region spans residues 930–1057 (FEVKDHGTVL…ESMTFTMRNV (128 aa)).

This sequence belongs to the CarB family. In terms of assembly, composed of two chains; the small (or glutamine) chain promotes the hydrolysis of glutamine to ammonia, which is used by the large (or ammonia) chain to synthesize carbamoyl phosphate. Tetramer of heterodimers (alpha,beta)4. It depends on Mg(2+) as a cofactor. Mn(2+) is required as a cofactor.

The catalysed reaction is hydrogencarbonate + L-glutamine + 2 ATP + H2O = carbamoyl phosphate + L-glutamate + 2 ADP + phosphate + 2 H(+). It catalyses the reaction hydrogencarbonate + NH4(+) + 2 ATP = carbamoyl phosphate + 2 ADP + phosphate + 2 H(+). Its pathway is amino-acid biosynthesis; L-arginine biosynthesis; carbamoyl phosphate from bicarbonate: step 1/1. It functions in the pathway pyrimidine metabolism; UMP biosynthesis via de novo pathway; (S)-dihydroorotate from bicarbonate: step 1/3. Large subunit of the glutamine-dependent carbamoyl phosphate synthetase (CPSase). CPSase catalyzes the formation of carbamoyl phosphate from the ammonia moiety of glutamine, carbonate, and phosphate donated by ATP, constituting the first step of 2 biosynthetic pathways, one leading to arginine and/or urea and the other to pyrimidine nucleotides. The large subunit (synthetase) binds the substrates ammonia (free or transferred from glutamine from the small subunit), hydrogencarbonate and ATP and carries out an ATP-coupled ligase reaction, activating hydrogencarbonate by forming carboxy phosphate which reacts with ammonia to form carbamoyl phosphate. The polypeptide is Carbamoyl phosphate synthase large chain (Staphylococcus epidermidis (strain ATCC 35984 / DSM 28319 / BCRC 17069 / CCUG 31568 / BM 3577 / RP62A)).